Reading from the N-terminus, the 156-residue chain is MNPLRRKRLLIILAILAGVGIAVGLAMSALRENINLFYTPTQIANGEAPLDTRIRAGGMVEQGSLKRSGDSLDVTFVVTDFNKAVTITYRGILPDLFREGQGIVALGKLNADAVVVADEVLAKHDEKYMPPEVTKALKDSGQSRLARIRSLPRRAK.

At 1–8 the chain is on the cytoplasmic side; that stretch reads MNPLRRKR. The chain crosses the membrane as a helical; Signal-anchor for type II membrane protein span at residues 9-29; that stretch reads LLIILAILAGVGIAVGLAMSA. Topologically, residues 30-156 are periplasmic; the sequence is LRENINLFYT…RIRSLPRRAK (127 aa). Positions 124 and 128 each coordinate heme.

This sequence belongs to the CcmE/CycJ family.

It is found in the cell inner membrane. In terms of biological role, heme chaperone required for the biogenesis of c-type cytochromes. Transiently binds heme delivered by CcmC and transfers the heme to apo-cytochromes in a process facilitated by CcmF and CcmH. The sequence is that of Cytochrome c-type biogenesis protein CcmE from Pseudomonas fluorescens.